A 227-amino-acid polypeptide reads, in one-letter code: YEATS domain-containing protein 4 (227 aa).

Residues 15–158 (RVKGVTIVKP…AMMQQLLTTS (144 aa)) form the YEATS domain. Lysine 37 participates in a covalent cross-link: Glycyl lysine isopeptide (Lys-Gly) (interchain with G-Cter in SUMO2). Residues 93–97 (WGEFE) are diacetylated histone H3 binding. Residues 163–227 (LGAYKHETEF…LEEDDQAKDI (65 aa)) form an interaction with MLLT10 region. Residues 168–227 (HETEFAELEVKTREKLEAAKKKTSFEIAELKERLKASRETINCLKNEIRKLEEDDQAKDI) form an interaction with TACC1 region. Residues 178 to 226 (KTREKLEAAKKKTSFEIAELKERLKASRETINCLKNEIRKLEEDDQAKD) are a coiled coil.

In terms of assembly, component of numerous complexes with chromatin remodeling and histone acetyltransferase activity. Component of the NuA4 histone acetyltransferase complex which contains the catalytic subunit KAT5/TIP60 and the subunits EP400, TRRAP/PAF400, BRD8/SMAP, EPC1, DMAP1/DNMAP1, RUVBL1/TIP49, RUVBL2, ING3, actin, ACTL6A/BAF53A, MORF4L1/MRG15, MORF4L2/MRGX, MRGBP, YEATS4/GAS41, VPS72/YL1 and MEAF6. The NuA4 complex interacts with MYC and the adenovirus E1A protein. Component of a NuA4-related complex which contains EP400, TRRAP/PAF400, SRCAP, BRD8/SMAP, EPC1, DMAP1/DNMAP1, RUVBL1/TIP49, RUVBL2, actin, ACTL6A/BAF53A, VPS72 and YEATS4/GAS41. Interacts with MLLT10/AF10. Also interacts with the SWI/SNF component SMARCB1/BAF47, TACC1 and TACC2, and the nuclear matrix protein NUMA1. Expressed in brain, heart, kidney, liver, lung, pancreas, placenta and skeletal muscle.

It is found in the nucleus. In terms of biological role, chromatin reader component of the NuA4 histone acetyltransferase (HAT) complex, a complex involved in transcriptional activation of select genes principally by acetylation of nucleosomal histones H4 and H2A. Specifically recognizes and binds acylated histone H3, with a preference for histone H3 diacetylated at 'Lys-18' and 'Lys-27' (H3K18ac and H3K27ac) or histone H3 diacetylated at 'Lys-14' and 'Lys-27' (H3K14ac and H3K27ac). Also able to recognize and bind crotonylated histone H3. May also recognize and bind histone H3 succinylated at 'Lys-122' (H3K122succ); additional evidences are however required to confirm this result in vivo. Plays a key role in histone variant H2AZ1/H2A.Z deposition into specific chromatin regions: recognizes and binds H3K14ac and H3K27ac on the promoters of actively transcribed genes and recruits NuA4-related complex to deposit H2AZ1/H2A.Z. H2AZ1/H2A.Z deposition is required for maintenance of embryonic stem cell. In Homo sapiens (Human), this protein is YEATS domain-containing protein 4.